A 161-amino-acid polypeptide reads, in one-letter code: Protein yippee-like B0546.4 (161 aa).

The Yippee domain occupies 14 to 111; the sequence is SLYGCVVCNT…IENANFEKIA (98 aa). Positions 18, 21, 74, and 77 each coordinate Zn(2+). The disordered stretch occupies residues 117–161; sequence PLGEDRQEAPPAPNLEMSRYPLEAEKKSRPQYRTVSVSSSSSAEC. The span at 151–161 shows a compositional bias: low complexity; the sequence is VSVSSSSSAEC.

The protein belongs to the yippee family.

The chain is Protein yippee-like B0546.4 from Caenorhabditis elegans.